Here is a 215-residue protein sequence, read N- to C-terminus: N-(5'-phosphoribosyl)anthranilate isomerase (215 aa).

This sequence belongs to the TrpF family.

The enzyme catalyses N-(5-phospho-beta-D-ribosyl)anthranilate = 1-(2-carboxyphenylamino)-1-deoxy-D-ribulose 5-phosphate. It functions in the pathway amino-acid biosynthesis; L-tryptophan biosynthesis; L-tryptophan from chorismate: step 3/5. The chain is N-(5'-phosphoribosyl)anthranilate isomerase from Sinorhizobium medicae (strain WSM419) (Ensifer medicae).